The chain runs to 261 residues: Insulin-like growth factor-binding protein-related protein 1 (261 aa).

Positions Met1–Cys17 are cleaved as a signal peptide. Residues Glu18–Leu101 form the IGFBP N-terminal domain. 8 disulfides stabilise this stretch: Cys21-Cys45, Cys24-Cys47, Cys29-Cys48, Cys36-Cys51, Cys59-Cys82, Cys76-Cys98, Cys100-Cys118, and Cys107-Cys139. Residues Asn70–Ser141 form the Kazal-like domain. In terms of domain architecture, Ig-like C2-type spans Pro143–Val243. Residue Asn154 is glycosylated (N-linked (GlcNAc...) asparagine). Cys164 and Cys227 are disulfide-bonded.

As to expression, expressed by the venom gland.

Its subcellular location is the secreted. The chain is Insulin-like growth factor-binding protein-related protein 1 from Cupiennius salei (American wandering spider).